The sequence spans 68 residues: Protein SlyX homolog (68 aa).

It belongs to the SlyX family.

The protein is Protein SlyX homolog of Brucella abortus (strain S19).